Consider the following 178-residue polypeptide: MSLDSLKSAVPDYAKDLKLNLGSVIGNSDLPAQQLWGTVLATAIASRSPIVLRELEPEAKANLSPEAYSAAKSAAAVMAMNNVFYRTRHLLSDHEYGTLRAGLRMNVIGNPGVDKVDFELWSFAVSAINGCGMCLDSHEQVLRKAGVDRETIQEAFKIAAVVEAVGVTLDAEAVLAAE.

Cysteine 131 (proton donor) is an active-site residue. A disulfide bridge links cysteine 131 with cysteine 134. Catalysis depends on cysteine 134, which acts as the Cysteine sulfenic acid (-SOH) intermediate.

The protein belongs to the AhpD family. As to quaternary structure, homotrimer.

It catalyses the reaction N(6)-[(R)-dihydrolipoyl]-L-lysyl-[lipoyl-carrier protein] + a hydroperoxide = N(6)-[(R)-lipoyl]-L-lysyl-[lipoyl-carrier protein] + an alcohol + H2O. Its function is as follows. Antioxidant protein with alkyl hydroperoxidase activity. Required for the reduction of the AhpC active site cysteine residues and for the regeneration of the AhpC enzyme activity. This is Alkyl hydroperoxide reductase AhpD from Streptomyces coelicolor (strain ATCC BAA-471 / A3(2) / M145).